The sequence spans 593 residues: MRVSRLLLVTLRDVPAEAEITSHQLLLRAGYIRRVGSGIYAYLPLMWRVLQKITAVVREEMNRAGAQETLLPQLHPAELWQKSGRWQGYTAGEGIMFHLEDRQGRELGLGPTHEEVITSLAGELLRSYRQLPVNLYQIQTKFRDEIRPRFGLMRGREFIMKDAYSFHASEADLRETYGAMDQAYRRIFERCGLDAVPVDADSGAIGGAASQEFMVTADAGEDLILISDDGQYAANLEKAVSIPSAASPLPDGPEESIPTPGLGSIESLCDTKCWDPSQVVKVLLFVATLDDETLQPLLVSLRGDQELNPTKVVNAVSRTLNKGVLDCRPITPDYTNRQQIDPIPFGSIGPDLSDDVLKGAKTWQPTFLRLADETASELGSFICGANQPDLHRFNTSWTAIEQKPTTLDLRNARAGDVCQHNLESRLTEKRGIEVGHIFQLGRKYSEAMESGFTNENGKTEPFWMGCYGIGVSRLAQAAVEQHHDDSGICWPTAIAPFEAIVVVANIQDDTQGQLGEALYAELQAADVDVLLDDRKERAGVKFKDADLIGIPWRIVVGRDASEGIVELVRRSSREVRKLPHAEAVSCLIKALHP.

It belongs to the class-II aminoacyl-tRNA synthetase family. ProS type 1 subfamily. As to quaternary structure, homodimer.

It localises to the cytoplasm. It catalyses the reaction tRNA(Pro) + L-proline + ATP = L-prolyl-tRNA(Pro) + AMP + diphosphate. Catalyzes the attachment of proline to tRNA(Pro) in a two-step reaction: proline is first activated by ATP to form Pro-AMP and then transferred to the acceptor end of tRNA(Pro). As ProRS can inadvertently accommodate and process non-cognate amino acids such as alanine and cysteine, to avoid such errors it has two additional distinct editing activities against alanine. One activity is designated as 'pretransfer' editing and involves the tRNA(Pro)-independent hydrolysis of activated Ala-AMP. The other activity is designated 'posttransfer' editing and involves deacylation of mischarged Ala-tRNA(Pro). The misacylated Cys-tRNA(Pro) is not edited by ProRS. In Synechococcus sp. (strain CC9605), this protein is Proline--tRNA ligase.